A 232-amino-acid polypeptide reads, in one-letter code: tRNA pseudouridine synthase B (232 aa).

Residue aspartate 53 is the Nucleophile of the active site.

This sequence belongs to the pseudouridine synthase TruB family. Type 1 subfamily.

The enzyme catalyses uridine(55) in tRNA = pseudouridine(55) in tRNA. Functionally, responsible for synthesis of pseudouridine from uracil-55 in the psi GC loop of transfer RNAs. The chain is tRNA pseudouridine synthase B from Malacoplasma penetrans (strain HF-2) (Mycoplasma penetrans).